A 263-amino-acid polypeptide reads, in one-letter code: Type III pantothenate kinase (263 aa).

ATP is bound at residue 6–13 (DVGNTNIK). 108-111 (GSDR) is a substrate binding site. The Proton acceptor role is filled by Asp-110. K(+) is bound at residue Asp-131. Position 134 (Thr-134) interacts with ATP. Thr-187 contacts substrate.

The protein belongs to the type III pantothenate kinase family. Homodimer. NH4(+) is required as a cofactor. K(+) serves as cofactor.

The protein localises to the cytoplasm. The enzyme catalyses (R)-pantothenate + ATP = (R)-4'-phosphopantothenate + ADP + H(+). It participates in cofactor biosynthesis; coenzyme A biosynthesis; CoA from (R)-pantothenate: step 1/5. Catalyzes the phosphorylation of pantothenate (Pan), the first step in CoA biosynthesis. The chain is Type III pantothenate kinase from Anaplasma phagocytophilum (strain HZ).